The primary structure comprises 247 residues: MPITVNKLRHDTHHFFYKKIGAIFFISIFATFMNILIDMFIKPDMHIVSIMENNKFINASSLLEFIQNMNLNEKHELLKYSILKIMESLISKTTLLGSIIILISFVSEPKKKSIVSSIRTFFLFFPSLFILNFLTTFIIQIGFMLLIIPGILLSIILSLSPIILFFKKNRLLDSIRLSMYISWKYIKIIGPGVLFWMCGKFILTMLLAHFSLINKNVLFLISNISMNILFSILIIYLFRFYMIFLRS.

The next 6 helical transmembrane spans lie at 20–40 (IGAI…IDMF), 85–105 (IMES…LISF), 114–134 (IVSS…LNFL), 137–157 (FIIQ…SIIL), 188–208 (IIGP…MLLA), and 218–238 (LFLI…IYLF).

The protein belongs to the UPF0259 family.

It is found in the cell membrane. The sequence is that of UPF0259 membrane protein BUAPTUC7_273 from Buchnera aphidicola subsp. Acyrthosiphon pisum (strain Tuc7).